Here is a 439-residue protein sequence, read N- to C-terminus: MDGKPATRKGPDFCSLRYGLALIMHFSNFTMITQRVSLSIAIIAMVNTTQQQGLSNASTEGPVADAFNNSSISIKEFDTKASVYQWSPETQGIIFSSINYGIILTLIPSGYLAGIFGAKKMLGAGLLISSLLTLFTPLAADFGVILVIMVRTVQGMAQGMAWTGQFTIWAKWAPPLERSKLTTIAGSGSAFGSFIILCVGGLISQALSWPFIFYIFGSTGCVCCLLWFTVIYDDPMHHPCISVREKEHILSSLAQQPSSPGRAVPIKAMVTCLPLWAIFLGFFSHFWLCTIILTYLPTYISTLLHVNIRDSGVLSSLPFIAAASCTILGGQLADFLLSRNLLRLITVRKLFSSLGLLLPSICAVALPFVASSYVITIILLILIPGTSNLCDSGFIINTLDIAPRYASFLMGISRGFGLIAGIISSTATGFLISQVGPVY.

Residues asparagine 47, asparagine 56, asparagine 68, and asparagine 69 are each glycosylated (N-linked (GlcNAc...) asparagine). The next 9 membrane-spanning stretches (helical) occupy residues 98-118, 130-150, 183-203, 211-231, 273-293, 317-337, 350-369, 374-396, and 415-435; these read INYGIILTLIPSGYLAGIFGA, SLLTLFTPLAADFGVILVIMV, TIAGSGSAFGSFIILCVGGLI, FIFYIFGSTGCVCCLLWFTVI, LPLWAIFLGFFSHFWLCTIIL, LPFIAAASCTILGGQLADFLL, LFSSLGLLLPSICAVALPFV, VITIILLILIPGTSNLCDSGFII, and GFGLIAGIISSTATGFLISQV.

It belongs to the major facilitator superfamily. Sodium/anion cotransporter family. Expressed in the small intestine, kidney, spleen and testis. Not detected in fetal brain, bone marrow, and mammary gland.

The protein resides in the apical cell membrane. The catalysed reaction is 3 Na(+)(out) + phosphate(out) = 3 Na(+)(in) + phosphate(in). The enzyme catalyses urate(out) + n chloride(in) = urate(in) + n chloride(out). In terms of biological role, acts as a membrane potential-dependent organic anion transporter, the transport requires a low concentration of chloride ions. Mediates chloride-dependent transport of urate. Can actively transport inorganic phosphate into cells via Na(+) cotransport. This Homo sapiens (Human) protein is Sodium-dependent phosphate transport protein 3 (SLC17A2).